Consider the following 368-residue polypeptide: 3-dehydroquinate synthase (368 aa).

NAD(+) is bound by residues Asp-69–Lys-74, Gly-103–Asp-107, Thr-127–Thr-128, Lys-140, and Lys-149. Zn(2+) is bound by residues Glu-182, His-245, and His-262.

Belongs to the sugar phosphate cyclases superfamily. Dehydroquinate synthase family. Requires Co(2+) as cofactor. It depends on Zn(2+) as a cofactor. NAD(+) is required as a cofactor.

It is found in the cytoplasm. The enzyme catalyses 7-phospho-2-dehydro-3-deoxy-D-arabino-heptonate = 3-dehydroquinate + phosphate. Its pathway is metabolic intermediate biosynthesis; chorismate biosynthesis; chorismate from D-erythrose 4-phosphate and phosphoenolpyruvate: step 2/7. Catalyzes the conversion of 3-deoxy-D-arabino-heptulosonate 7-phosphate (DAHP) to dehydroquinate (DHQ). The sequence is that of 3-dehydroquinate synthase from Pseudomonas aeruginosa (strain LESB58).